We begin with the raw amino-acid sequence, 196 residues long: UPF0319 protein VV0948 (196 aa).

The signal sequence occupies residues 1-19 (MKKMMILSALALFSSSLFA).

The protein belongs to the UPF0319 family.

The chain is UPF0319 protein VV0948 from Vibrio vulnificus (strain YJ016).